Here is a 690-residue protein sequence, read N- to C-terminus: ATP-dependent DNA helicase Hel308 (690 aa).

ATP contacts are provided by residues Gln26 and Ile45–Thr52. Residues Ala32–Asp188 form the Helicase ATP-binding domain. Positions Asp133–His136 match the DEAH box motif. Residues Glu208 to Ile417 form the Helicase C-terminal domain.

Belongs to the helicase family. Hel308 subfamily. In terms of assembly, monomer. Binds replication protein A (RPA), in presence and absence of DNA.

The enzyme catalyses Couples ATP hydrolysis with the unwinding of duplex DNA by translocating in the 3'-5' direction.. The catalysed reaction is ATP + H2O = ADP + phosphate + H(+). In terms of biological role, DNA-dependent ATPase and 3'-5' DNA helicase that may be involved in repair of stalled replication forks. Helicase with 3'-to 5'- polarity; able to unwind over 100 bp of DNA at 50 degrees Celsius. Unwinds forked DNA, preferentially on lagging strand forks; has weaker activity on Holliday junctions. Displaces the invading strand in DNA D-loops. Unwinds short oligonucleotides from dsDNA with 3'- but not blunt ends or 5'-ssDNA tails in an ATP-dependent manner. ATPase activity is stimulated by ssDNA but not dsDNA, protein binds ssDNA, dsDNA with 5'- or 3'-overhangs but not blunt ended dsDNA and replication forks. Replication forks bind both this protein and RPA. RPA does not stimulate the helicase activity of this protein. In Methanothermobacter thermautotrophicus (strain ATCC 29096 / DSM 1053 / JCM 10044 / NBRC 100330 / Delta H) (Methanobacterium thermoautotrophicum), this protein is ATP-dependent DNA helicase Hel308.